The chain runs to 737 residues: Transcription termination factor Rho (737 aa).

A disordered region spans residues 1-396; the sequence is MSGPCSAHRV…ENSYLPDPTD (396 aa). Composition is skewed to low complexity over residues 16 to 28, 62 to 86, and 101 to 111; these read RPTIRSPRITRSS, ASRASSESRSESGSGLSAEGSGSDA, and DAESAPTAADT. Composition is skewed to basic and acidic residues over residues 145 to 175, 196 to 256, 266 to 279, and 286 to 324; these read PRAESPRSEPRTESRPEPRAENGSETRHESR, SMER…DRRD, GRPDNRGPGGDRHQ, and DRSHDRGPDRNNERAFDRPERPDRQGESSDRFDSQDRGG. The span at 328 to 339 shows a compositional bias: basic residues; sequence RNGRRGRNRFRR. Over residues 347-360 the composition is skewed to polar residues; it reads APISGSHAPSQGSP. Residues 367 to 439 enclose the Rho RNA-BD domain; sequence EGTMAGWFDP…IEVQTLNDGS (73 aa). Residues 376 to 387 are compositionally biased toward basic and acidic residues; sequence PSRDGGFLRRPE. ATP contacts are provided by residues 487–492, 499–504, and Arg-530; these read GYGQRA and RAGKTT.

This sequence belongs to the Rho family. Homohexamer. The homohexamer assembles into an open ring structure.

Functionally, facilitates transcription termination by a mechanism that involves Rho binding to the nascent RNA, activation of Rho's RNA-dependent ATPase activity, and release of the mRNA from the DNA template. In Gemmatimonas aurantiaca (strain DSM 14586 / JCM 11422 / NBRC 100505 / T-27), this protein is Transcription termination factor Rho.